The following is a 439-amino-acid chain: tRNA(Ile)-lysidine synthase (439 aa).

23-28 (SGGLDS) contacts ATP.

It belongs to the tRNA(Ile)-lysidine synthase family.

The protein resides in the cytoplasm. It carries out the reaction cytidine(34) in tRNA(Ile2) + L-lysine + ATP = lysidine(34) in tRNA(Ile2) + AMP + diphosphate + H(+). Its function is as follows. Ligates lysine onto the cytidine present at position 34 of the AUA codon-specific tRNA(Ile) that contains the anticodon CAU, in an ATP-dependent manner. Cytidine is converted to lysidine, thus changing the amino acid specificity of the tRNA from methionine to isoleucine. The protein is tRNA(Ile)-lysidine synthase of Methylococcus capsulatus (strain ATCC 33009 / NCIMB 11132 / Bath).